A 250-amino-acid polypeptide reads, in one-letter code: MADS-box protein J2 (250 aa).

Positions 1–61 (MGRGRVELKR…GKLYEFSSAS (61 aa)) constitute an MADS-box domain. The K-box domain occupies 87 to 177 (TQMNYNEYVR…KNKLEESAAR (91 aa)).

It localises to the nucleus. Functionally, MADS-box transcription factor that acts redundantly with EJ2 to control meristem maturation and inflorescence architecture. This chain is MADS-box protein J2, found in Solanum lycopersicum (Tomato).